A 429-amino-acid chain; its full sequence is ETS domain-containing protein Elk-1 (429 aa).

The ETS DNA-binding region spans 5–86 (VTLWQFLLQL…SGQKFVYKFV (82 aa)). Disordered stretches follow at residues 119 to 146 (HAGPGDTATGKPGTPKGAGMTGQGGLAR), 165 to 204 (SLQPQPQPPIPPRPASVLPNTTPAGVPAPASGSRSTSPNP), and 227 to 253 (APNQKSEELSLDPSFGHPQPPEVKVEG). The segment covering 169 to 178 (QPQPPIPPRP) has biased composition (pro residues). Glycyl lysine isopeptide (Lys-Gly) (interchain with G-Cter in SUMO) cross-links involve residues Lys-231, Lys-250, and Lys-255. The span at 302 to 312 (STSTTEITQPQ) shows a compositional bias: polar residues. Positions 302 to 354 (STSTTEITQPQKGRKPRDLELPLSPSLLGGQGPERTPGSGTSSGLQAPGPALT) are disordered. Residue Ser-325 is modified to Phosphoserine; by MAPK1. Phosphothreonine; by MAPK1 is present on residues Thr-337, Thr-354, Thr-364, and Thr-369. The tract at residues 350-400 (GPALTPSLLPTHTLTPVLLTPSSLPPSIHFWSTLSPIAPRSPAKLSFQFPS) is sufficient for interaction with MAD2L2. An O-linked (GlcNAc) threonine glycan is attached at Thr-382. Ser-384 bears the Phosphoserine; by MAPK1 and MAPK8 mark. Ser-390 is subject to Phosphoserine; by MAPK1. Thr-418 is subject to Phosphothreonine; by MAPK1. Phosphoserine; by MAPK1 is present on Ser-423.

Belongs to the ETS family. In terms of assembly, interacts in its sumoylated form with PIAS2/PIASX which enhances its transcriptional activator activity. Interacts with MAD2L2; the interaction is direct and promotes phosphorylation by the kinases MAPK8 and/or MAPK9. Interacts with POU1F1. Post-translationally, sumoylation represses transcriptional activator activity as it results in recruitment of HDAC2 to target gene promoters which leads to decreased histone acetylation and reduced transactivator activity. It also regulates nuclear retention. On mitogenic stimulation, phosphorylated on C-terminal serine and threonine residues by MAPK1 but also MAPK8 and/or MAPK9. Phosphorylation leads to loss of sumoylation and restores transcriptional activator activity. Phosphorylated and activated by CaMK4, MAPK11, MAPK12 and MAPK14. Upon bFGF stimulus, phosphorylated by PAK1. Phosphorylated by PRP4K at Thr-418; phosphorylation activation ELK1 transcriptional activity. Predominantly expressed in the brain, and to a lesser extent in the heart, liver and muscle.

It localises to the nucleus. Transcription factor that binds to purine-rich DNA sequences. Forms a ternary complex with SRF and the ETS and SRF motifs of the serum response element (SRE) on the promoter region of immediate early genes such as FOS and IER2. Induces target gene transcription upon JNK and MAPK-signaling pathways stimulation. This chain is ETS domain-containing protein Elk-1, found in Mus musculus (Mouse).